The primary structure comprises 127 residues: Fluoride-specific ion channel FluC (127 aa).

Transmembrane regions (helical) follow at residues 7–27, 37–57, 69–89, and 102–122; these read LILISSGAALGASLRWGMGLI, FGTLIANYLGCFIIGLIMAMI, LFMITGFLGSLTTFSSFSAEV, and LGIMSAHLFGCLIFTGIGVLI. 2 residues coordinate Na(+): Gly77 and Thr80.

Belongs to the fluoride channel Fluc/FEX (TC 1.A.43) family.

It is found in the cell inner membrane. The catalysed reaction is fluoride(in) = fluoride(out). Its activity is regulated as follows. Na(+) is not transported, but it plays an essential structural role and its presence is essential for fluoride channel function. Fluoride-specific ion channel. Important for reducing fluoride concentration in the cell, thus reducing its toxicity. The protein is Fluoride-specific ion channel FluC of Mannheimia succiniciproducens (strain KCTC 0769BP / MBEL55E).